A 288-amino-acid chain; its full sequence is Proteasome subunit beta (288 aa).

The propeptide at 1-60 is removed in mature form; by autocatalysis; the sequence is MESNADWGSRGGLPQAFLTPGISSFSEFLKGFAPEYLPSGRPLPGGLGSASAAGDIAPHG. The active-site Nucleophile is the T61.

Belongs to the peptidase T1B family. The 20S proteasome core is composed of 14 alpha and 14 beta subunits that assemble into four stacked heptameric rings, resulting in a barrel-shaped structure. The two inner rings, each composed of seven catalytic beta subunits, are sandwiched by two outer rings, each composed of seven alpha subunits. The catalytic chamber with the active sites is on the inside of the barrel. Has a gated structure, the ends of the cylinder being occluded by the N-termini of the alpha-subunits. Is capped by the proteasome-associated ATPase, ARC.

The protein localises to the cytoplasm. It carries out the reaction Cleavage of peptide bonds with very broad specificity.. The protein operates within protein degradation; proteasomal Pup-dependent pathway. With respect to regulation, the formation of the proteasomal ATPase ARC-20S proteasome complex, likely via the docking of the C-termini of ARC into the intersubunit pockets in the alpha-rings, may trigger opening of the gate for substrate entry. Interconversion between the open-gate and close-gate conformations leads to a dynamic regulation of the 20S proteasome proteolysis activity. Functionally, component of the proteasome core, a large protease complex with broad specificity involved in protein degradation. The polypeptide is Proteasome subunit beta (Catenulispora acidiphila (strain DSM 44928 / JCM 14897 / NBRC 102108 / NRRL B-24433 / ID139908)).